A 522-amino-acid polypeptide reads, in one-letter code: Cytochrome P450 4F4 (522 aa).

The next 2 membrane-spanning stretches (helical) occupy residues 15–35 (TSLPWLLLLLIGASWLLVRVL) and 87–107 (GFMTWLGPILPIITLCHPDVI). The heme site is built by Glu328 and Cys468.

Belongs to the cytochrome P450 family. It depends on heme as a cofactor. As to expression, expressed in hepatocytes. High expression in liver and kidney. Lower expression in brain.

It is found in the endoplasmic reticulum membrane. The protein resides in the microsome membrane. The catalysed reaction is (5Z,8Z,11Z,14Z)-eicosatetraenoate + reduced [NADPH--hemoprotein reductase] + O2 = 20-hydroxy-(5Z,8Z,11Z,14Z)-eicosatetraenoate + oxidized [NADPH--hemoprotein reductase] + H2O + H(+). The enzyme catalyses leukotriene B4 + reduced [NADPH--hemoprotein reductase] + O2 = 20-hydroxy-leukotriene B4 + oxidized [NADPH--hemoprotein reductase] + H2O + H(+). It carries out the reaction 6-trans-leukotriene B4 + reduced [NADPH--hemoprotein reductase] + O2 = 20-hydroxy-6-trans-leukotriene B4 + oxidized [NADPH--hemoprotein reductase] + H2O + H(+). It catalyses the reaction prostaglandin A1 + reduced [NADPH--hemoprotein reductase] + O2 = 20-hydroxy prostaglandin A1 + oxidized [NADPH--hemoprotein reductase] + H2O + H(+). The catalysed reaction is prostaglandin E1 + reduced [NADPH--hemoprotein reductase] + O2 = 20-hydroxy prostaglandin E1 + oxidized [NADPH--hemoprotein reductase] + H2O + H(+). Its function is as follows. A cytochrome P450 monooxygenase involved in the metabolism of arachidonic acid and its oxygenated derivatives. Mechanistically, uses molecular oxygen inserting one oxygen atom into a substrate, and reducing the second into a water molecule, with two electrons provided by NADPH via cytochrome P450 reductase (CPR; NADPH-ferrihemoprotein reductase). Participates in the conversion of arachidonic acid to omega-hydroxyeicosatetraenoic acid (20-HETE), a signaling molecule acting both as vasoconstrictive and natriuretic with overall effect on arterial blood pressure. Hydroxylates the terminal carbon (omega-hydroxylation) of inflammatory lipid mediators, including prostaglandin (PG) A1, PGE1 and leukotriene B4 (LTB4), and may play a role in inactivation of these oxylipins during the resolution of inflammation. The protein is Cytochrome P450 4F4 of Rattus norvegicus (Rat).